A 214-amino-acid chain; its full sequence is Probable GTP-binding protein EngB (214 aa).

One can recognise an EngB-type G domain in the interval 25–203 (EGAEVAFAGR…EQVITGWLNL (179 aa)). Residues 33–40 (GRSNAGKS), 60–64 (GRTQL), 80–83 (DLPG), 147–150 (TKSD), and 182–184 (FSS) contribute to the GTP site. 2 residues coordinate Mg(2+): S40 and T62.

It belongs to the TRAFAC class TrmE-Era-EngA-EngB-Septin-like GTPase superfamily. EngB GTPase family. Mg(2+) is required as a cofactor.

In terms of biological role, necessary for normal cell division and for the maintenance of normal septation. This Teredinibacter turnerae (strain ATCC 39867 / T7901) protein is Probable GTP-binding protein EngB.